A 172-amino-acid chain; its full sequence is Agamous-like MADS-box protein AGL29 (172 aa).

An MADS-box domain is found at 1-61 (MGRRKIKMEM…GKPFSYGKPN (61 aa)). Positions 86 to 123 (NYRPKLKRLSERLDLLNQEVEAEKERGEKSQEKLESAG) form a coiled coil. Positions 106–125 (EAEKERGEKSQEKLESAGDE) are disordered.

As to expression, expressed in pollen.

It localises to the nucleus. Probable transcription factor. The protein is Agamous-like MADS-box protein AGL29 of Arabidopsis thaliana (Mouse-ear cress).